A 98-amino-acid chain; its full sequence is Large ribosomal subunit protein uL23 (98 aa).

Belongs to the universal ribosomal protein uL23 family. Part of the 50S ribosomal subunit. Contacts protein L29, and trigger factor when it is bound to the ribosome.

Its function is as follows. One of the early assembly proteins it binds 23S rRNA. One of the proteins that surrounds the polypeptide exit tunnel on the outside of the ribosome. Forms the main docking site for trigger factor binding to the ribosome. The chain is Large ribosomal subunit protein uL23 from Streptococcus gordonii (strain Challis / ATCC 35105 / BCRC 15272 / CH1 / DL1 / V288).